A 236-amino-acid chain; its full sequence is 2,3,4,5-tetrahydropyridine-2,6-dicarboxylate N-acetyltransferase (236 aa).

This sequence belongs to the transferase hexapeptide repeat family. DapH subfamily.

It catalyses the reaction (S)-2,3,4,5-tetrahydrodipicolinate + acetyl-CoA + H2O = L-2-acetamido-6-oxoheptanedioate + CoA. The protein operates within amino-acid biosynthesis; L-lysine biosynthesis via DAP pathway; LL-2,6-diaminopimelate from (S)-tetrahydrodipicolinate (acetylase route): step 1/3. Its function is as follows. Catalyzes the transfer of an acetyl group from acetyl-CoA to tetrahydrodipicolinate. This is 2,3,4,5-tetrahydropyridine-2,6-dicarboxylate N-acetyltransferase from Thermotoga maritima (strain ATCC 43589 / DSM 3109 / JCM 10099 / NBRC 100826 / MSB8).